We begin with the raw amino-acid sequence, 321 residues long: Nucleus-vacuole junction protein 1 (321 aa).

Positions 1–22 (MTRPPLVRGIFSLGLSVAVLKG) are cleaved as a signal peptide. The tract at residues 73–125 (ELSWRKVFNFISRQSSELDTRIYVLILLLSFLLPIAWTVLDGDRETTLEDKDN) is TSC13-binding. A helical transmembrane segment spans residues 94 to 114 (IYVLILLLSFLLPIAWTVLDG). Positions 139-195 (KHYNDGERAVLQFGKNRSEPIILSYKDMNVLEGEHEFTSKEEHSNSHLTSKSENALN) are OSH1-binding. Phosphoserine occurs at positions 156 and 199. Positions 211–275 (LEEDKNEPNG…SLKSSTSFPI (65 aa)) are disordered. The VAC8-binding stretch occupies residues 233–321 (DCSSSSEVES…EQAYSQPFRY (89 aa)). The segment covering 242-262 (SQSKCRKESTAEPDSLSRDTR) has biased composition (basic and acidic residues). Low complexity predominate over residues 263 to 272 (TTSSLKSSTS). A phosphoserine mark is found at serine 285 and serine 298. The interval 299 to 321 (PTKSSNLDAQVNTEQAYSQPFRY) is disordered.

As to quaternary structure, interacts with OSH1, TSC13 and VAC8.

Its subcellular location is the nucleus outer membrane. In terms of biological role, involved in the formation of nucleus-vacuole junctions (NVJs) during piecemeal microautophagy of the nucleus (PMN). NVJs are interorganelle interfaces mediated by NVJ1 in the nuclear envelope and VAC8 on the vacuole membrane. Together, NVJ1 and VAC8 form Velcro-like patches through which teardrop-like portions of the nucleus are pinched off into the vacuolar lumen and degraded by the PMN process. Also acts as an outer-nuclear membrane receptor for OSH1 and TSC13. This Saccharomyces cerevisiae (strain ATCC 204508 / S288c) (Baker's yeast) protein is Nucleus-vacuole junction protein 1 (NVJ1).